The sequence spans 205 residues: ATP-dependent Clp protease proteolytic subunit (205 aa).

Ser-107 serves as the catalytic Nucleophile. The active site involves His-132.

Belongs to the peptidase S14 family. Fourteen ClpP subunits assemble into 2 heptameric rings which stack back to back to give a disk-like structure with a central cavity, resembling the structure of eukaryotic proteasomes.

It localises to the cytoplasm. It catalyses the reaction Hydrolysis of proteins to small peptides in the presence of ATP and magnesium. alpha-casein is the usual test substrate. In the absence of ATP, only oligopeptides shorter than five residues are hydrolyzed (such as succinyl-Leu-Tyr-|-NHMec, and Leu-Tyr-Leu-|-Tyr-Trp, in which cleavage of the -Tyr-|-Leu- and -Tyr-|-Trp bonds also occurs).. Functionally, cleaves peptides in various proteins in a process that requires ATP hydrolysis. Has a chymotrypsin-like activity. Plays a major role in the degradation of misfolded proteins. This Pseudoalteromonas translucida (strain TAC 125) protein is ATP-dependent Clp protease proteolytic subunit.